A 165-amino-acid chain; its full sequence is UPF0262 protein blr1257 (165 aa).

This sequence belongs to the UPF0262 family.

In Bradyrhizobium diazoefficiens (strain JCM 10833 / BCRC 13528 / IAM 13628 / NBRC 14792 / USDA 110), this protein is UPF0262 protein blr1257.